The sequence spans 410 residues: Pectate lyase PEL9 (410 aa).

The signal sequence occupies residues Met-1 to Ala-18. The Ca(2+) site is built by Asp-191, Asp-215, Asp-216, and Asp-219. N-linked (GlcNAc...) asparagine glycosylation occurs at Asn-234. Residue Lys-271 is the Proton acceptor of the active site. The segment covering Gly-342–Glu-351 has biased composition (polar residues). Disordered stretches follow at residues Gly-342–Gly-361 and Glu-381–Ala-410.

Belongs to the polysaccharide lyase 9 family. Requires Ca(2+) as cofactor.

The protein resides in the secreted. It catalyses the reaction Eliminative cleavage of (1-&gt;4)-alpha-D-galacturonan to give oligosaccharides with 4-deoxy-alpha-D-galact-4-enuronosyl groups at their non-reducing ends.. Its activity is regulated as follows. Inhibited by iron ions. Activated in presence of the surfactant polysorbate 20, while inhibited in the presence of Triton X-100 and sodium dodecyl sulfate. Inhibited in presence of the organic solvents methanol, ethanol, propan-2-ol and acetone. Functionally, presents an endo-cleaving activity on the homogalacturonan (HG) region in pectin. Active on homogalacturonan with a degree of polymerization above 4, and does not appear to be affected by the degree of methylation of the substrate. Does not degrade linear rhamnogalacturonan. This is Pectate lyase PEL9 from Emericella nidulans (strain FGSC A4 / ATCC 38163 / CBS 112.46 / NRRL 194 / M139) (Aspergillus nidulans).